The chain runs to 255 residues: Microfibril-associated glycoprotein 4 (255 aa).

The N-terminal stretch at 1 to 20 (MEALLVLPLLLLLSAGPCAP) is a signal peptide. Residues 26-28 (RGD) carry the Cell attachment site motif. Residues 32–255 (KSCLQLPLDC…KRTEMKIRRA (224 aa)) form the Fibrinogen C-terminal domain. Asn-87 and Asn-137 each carry an N-linked (GlcNAc...) asparagine glycan.

As to quaternary structure, homodimer. Can also form higher oligomers. Interacts with FBN1, FBN2 and LOX. Interacts with COL1A1 in a Ca (2+)-dependent manner. Interacts with ELN in a Ca (2+)-dependent manner; this interaction promotes ELN self-assembly.

It is found in the secreted. Its subcellular location is the extracellular space. The protein resides in the extracellular matrix. Functionally, could be involved in calcium-dependent cell adhesion or intercellular interactions. May contribute to the elastic fiber assembly and/or maintenance. The polypeptide is Microfibril-associated glycoprotein 4 (MFAP4) (Bos taurus (Bovine)).